The chain runs to 408 residues: Putative transporter AmpG 2 (408 aa).

The next 11 helical transmembrane spans lie at 11–31, 49–69, 84–104, 110–130, 154–174, 177–197, 224–244, 261–281, 294–311, 353–373, and 382–402; these read IFNI…YLLT, IGLF…GPLL, YCLV…TSFN, IPFV…DMLI, FRIG…IISW, VYRT…FYPL, CIVI…LSIM, VGYK…GGFL, VLIY…LYFL, IALI…ISGY, and YFFI…LYLP.

It belongs to the major facilitator superfamily.

It localises to the cell inner membrane. The chain is Putative transporter AmpG 2 (ampG2) from Rickettsia prowazekii (strain Madrid E).